The chain runs to 126 residues: Lymphocyte antigen 6 complex locus protein G6c (126 aa).

The signal sequence occupies residues 1–19 (MKHLLLLTLSALLYCWVSA). The 92-residue stretch at 21 to 112 (TRCHSCYKVP…PRPTPALALI (92 aa)) folds into the UPAR/Ly6 domain. 3 disulfides stabilise this stretch: C23–C48, C26–C34, and C40–C66. N-linked (GlcNAc...) (high mannose) asparagine glycosylation is present at N89. C93 and C98 are oxidised to a cystine. S100 carries the GPI-anchor amidated serine lipid modification. The propeptide at 101-126 (PAPRPTPALALISLTSLAGLGLWLLH) is removed in mature form.

As to quaternary structure, monomer. In terms of processing, N-glycosylated. In terms of tissue distribution, highly expressed at the leading edges of cells, on filopodia.

Its subcellular location is the cell membrane. The sequence is that of Lymphocyte antigen 6 complex locus protein G6c (Ly6g6c) from Mus musculus (Mouse).